A 325-amino-acid polypeptide reads, in one-letter code: Glutarate 2-hydroxylase (325 aa).

Fe cation-binding residues include His-160, Asp-162, and His-292.

It belongs to the glutarate hydroxylase family. In terms of assembly, homotetramer. It depends on Fe(2+) as a cofactor.

The catalysed reaction is glutarate + 2-oxoglutarate + O2 = (S)-2-hydroxyglutarate + succinate + CO2. The protein operates within amino-acid degradation. Acts as an alpha-ketoglutarate-dependent dioxygenase catalyzing hydroxylation of glutarate (GA) to L-2-hydroxyglutarate (L2HG). Functions in a L-lysine degradation pathway that proceeds via cadaverine, glutarate and L-2-hydroxyglutarate. In Salmonella typhimurium (strain SL1344), this protein is Glutarate 2-hydroxylase.